The following is a 401-amino-acid chain: NADH-quinone oxidoreductase subunit D 2 (401 aa).

It belongs to the complex I 49 kDa subunit family. In terms of assembly, NDH-1 is composed of 14 different subunits. Subunits NuoB, C, D, E, F, and G constitute the peripheral sector of the complex.

It localises to the cell inner membrane. The enzyme catalyses a quinone + NADH + 5 H(+)(in) = a quinol + NAD(+) + 4 H(+)(out). In terms of biological role, NDH-1 shuttles electrons from NADH, via FMN and iron-sulfur (Fe-S) centers, to quinones in the respiratory chain. The immediate electron acceptor for the enzyme in this species is believed to be ubiquinone. Couples the redox reaction to proton translocation (for every two electrons transferred, four hydrogen ions are translocated across the cytoplasmic membrane), and thus conserves the redox energy in a proton gradient. This chain is NADH-quinone oxidoreductase subunit D 2, found in Thermodesulfovibrio yellowstonii (strain ATCC 51303 / DSM 11347 / YP87).